An 82-amino-acid polypeptide reads, in one-letter code: Small ribosomal subunit protein uS17 (82 aa).

This sequence belongs to the universal ribosomal protein uS17 family. As to quaternary structure, part of the 30S ribosomal subunit.

Functionally, one of the primary rRNA binding proteins, it binds specifically to the 5'-end of 16S ribosomal RNA. This chain is Small ribosomal subunit protein uS17, found in Synechococcus elongatus (strain ATCC 33912 / PCC 7942 / FACHB-805) (Anacystis nidulans R2).